Reading from the N-terminus, the 119-residue chain is Large ribosomal subunit protein bL20 (119 aa).

The protein belongs to the bacterial ribosomal protein bL20 family.

Its function is as follows. Binds directly to 23S ribosomal RNA and is necessary for the in vitro assembly process of the 50S ribosomal subunit. It is not involved in the protein synthesizing functions of that subunit. This is Large ribosomal subunit protein bL20 from Bradyrhizobium diazoefficiens (strain JCM 10833 / BCRC 13528 / IAM 13628 / NBRC 14792 / USDA 110).